The sequence spans 692 residues: Protein arginine N-methyltransferase 7 (692 aa).

SAM-dependent MTase PRMT-type domains lie at E14–W359 and A368–R692.

This sequence belongs to the class I-like SAM-binding methyltransferase superfamily. Protein arginine N-methyltransferase family. PRMT7 subfamily.

Functionally, essential arginine methyltransferase that can both catalyze the formation of omega-N monomethylarginine (MMA) and symmetrical dimethylarginine (sDMA). Specifically mediates the symmetrical dimethylation of arginine residues in the small nuclear ribonucleoproteins SmD1 and SmD3. This Drosophila persimilis (Fruit fly) protein is Protein arginine N-methyltransferase 7 (Art7).